Here is a 252-residue protein sequence, read N- to C-terminus: Triosephosphate isomerase (252 aa).

Residue 10-12 participates in substrate binding; the sequence is NWK. The active-site Electrophile is the His-96. Glu-168 (proton acceptor) is an active-site residue. Residues Gly-174, Ser-214, and 235–236 each bind substrate; that span reads GG.

The protein belongs to the triosephosphate isomerase family. Homodimer.

The protein localises to the cytoplasm. It carries out the reaction D-glyceraldehyde 3-phosphate = dihydroxyacetone phosphate. It participates in carbohydrate biosynthesis; gluconeogenesis. The protein operates within carbohydrate degradation; glycolysis; D-glyceraldehyde 3-phosphate from glycerone phosphate: step 1/1. In terms of biological role, involved in the gluconeogenesis. Catalyzes stereospecifically the conversion of dihydroxyacetone phosphate (DHAP) to D-glyceraldehyde-3-phosphate (G3P). This chain is Triosephosphate isomerase, found in Lactobacillus acidophilus (strain ATCC 700396 / NCK56 / N2 / NCFM).